Consider the following 249-residue polypeptide: Ribitol 2-dehydrogenase (249 aa).

20 to 43 provides a ligand contact to NAD(+); that stretch reads TGAASGIGLECARTLLGAGAKVVL. Tyr160 acts as the Proton acceptor in catalysis.

It belongs to the short-chain dehydrogenases/reductases (SDR) family. In terms of assembly, homotetramer.

It carries out the reaction ribitol + NAD(+) = D-ribulose + NADH + H(+). This is Ribitol 2-dehydrogenase (rbtD) from Klebsiella aerogenes (Enterobacter aerogenes).